We begin with the raw amino-acid sequence, 357 residues long: Alanine racemase (357 aa).

Lys-35 serves as the catalytic Proton acceptor; specific for D-alanine. The residue at position 35 (Lys-35) is an N6-(pyridoxal phosphate)lysine. Arg-131 lines the substrate pocket. Tyr-256 acts as the Proton acceptor; specific for L-alanine in catalysis. Met-304 lines the substrate pocket.

It belongs to the alanine racemase family. The cofactor is pyridoxal 5'-phosphate.

The catalysed reaction is L-alanine = D-alanine. It participates in amino-acid biosynthesis; D-alanine biosynthesis; D-alanine from L-alanine: step 1/1. Its function is as follows. Catalyzes the interconversion of L-alanine and D-alanine. May also act on other amino acids. This is Alanine racemase (alr) from Legionella pneumophila (strain Paris).